A 173-amino-acid chain; its full sequence is NADH-ubiquinone oxidoreductase chain 6 (173 aa).

Transmembrane regions (helical) follow at residues 1–21, 27–47, 48–68, 87–107, and 139–159; these read MTYF…AVAS, YGVL…LSLG, VSFI…VVFV, VVIY…VGDF, and WGAG…FVVL.

It belongs to the complex I subunit 6 family.

The protein resides in the mitochondrion membrane. It carries out the reaction a ubiquinone + NADH + 5 H(+)(in) = a ubiquinol + NAD(+) + 4 H(+)(out). Its function is as follows. Core subunit of the mitochondrial membrane respiratory chain NADH dehydrogenase (Complex I) that is believed to belong to the minimal assembly required for catalysis. Complex I functions in the transfer of electrons from NADH to the respiratory chain. The immediate electron acceptor for the enzyme is believed to be ubiquinone. This is NADH-ubiquinone oxidoreductase chain 6 (MT-ND6) from Struthio camelus (Common ostrich).